The sequence spans 118 residues: NLYQFKNMIHCTVPSRPWWHFADYGCYCGRGGKGTPVDDLDRCCQVHDNCYEKAGKMGCWPYFTLYKYKCSQGKLTCSGGNSKCGAAVCNCDLVAANCFAGARYIDANYNINFKKRCQ.

Disulfide bonds link C11-C70, C26-C117, C28-C44, C43-C98, C50-C91, C59-C84, and C77-C89. The Ca(2+) site is built by Y27, G29, and G31. The active site involves H47. Ca(2+) is bound at residue D48. Residues 52–69 (EKAGKMGCWPYFTLYKYK) carry the Coagulation factor Xa binding motif motif. D92 is a catalytic residue.

Belongs to the phospholipase A2 family. Group I subfamily. D49 sub-subfamily. Requires Ca(2+) as cofactor. As to expression, expressed by the venom gland.

The protein resides in the secreted. The enzyme catalyses a 1,2-diacyl-sn-glycero-3-phosphocholine + H2O = a 1-acyl-sn-glycero-3-phosphocholine + a fatty acid + H(+). In terms of biological role, snake venom phospholipase A2 (PLA2) that shows several activities. It shows strong anticoagulant activity, probably by binding to coagulation factor Xa (F10) and inhibiting the formation of the prothrombinase complex, shows direct hemolytic action, causes neuromuscular blockade with a gradual contracture and a decreased sensitivity to ACh and KCl, abolishes twitches evoked by indirect stimulation earlier than those by direct stimulation (in the mouse phrenic nerve-diaphragm preparation), and causes myonecrosis when injected intramuscularly. PLA2 catalyzes the calcium-dependent hydrolysis of the 2-acyl groups in 3-sn-phosphoglycerides. The polypeptide is Basic phospholipase A2 CM-III (Naja mossambica (Mozambique spitting cobra)).